A 424-amino-acid chain; its full sequence is Serine--tRNA ligase (424 aa).

Position 231-233 (threonine 231–glutamate 233) interacts with L-serine. Arginine 262–glutamate 264 is an ATP binding site. Glutamate 285 provides a ligand contact to L-serine. Glutamate 349–serine 352 serves as a coordination point for ATP. Residue serine 385 participates in L-serine binding.

It belongs to the class-II aminoacyl-tRNA synthetase family. Type-1 seryl-tRNA synthetase subfamily. As to quaternary structure, homodimer. The tRNA molecule binds across the dimer.

The protein localises to the cytoplasm. It catalyses the reaction tRNA(Ser) + L-serine + ATP = L-seryl-tRNA(Ser) + AMP + diphosphate + H(+). The enzyme catalyses tRNA(Sec) + L-serine + ATP = L-seryl-tRNA(Sec) + AMP + diphosphate + H(+). It participates in aminoacyl-tRNA biosynthesis; selenocysteinyl-tRNA(Sec) biosynthesis; L-seryl-tRNA(Sec) from L-serine and tRNA(Sec): step 1/1. Catalyzes the attachment of serine to tRNA(Ser). Is also able to aminoacylate tRNA(Sec) with serine, to form the misacylated tRNA L-seryl-tRNA(Sec), which will be further converted into selenocysteinyl-tRNA(Sec). The chain is Serine--tRNA ligase from Bacillus anthracis (strain A0248).